The sequence spans 572 residues: Moesin (572 aa).

Residues 1-294 (MPRGVAVRVT…GNHELYMRRR (294 aa)) form the FERM domain. 2 disordered regions span residues 444 to 508 (SQER…SYLP) and 523 to 544 (LQAM…QENI). Residues 454 to 475 (AQEAAAAQHAAQLAAQREAQQL) are compositionally biased toward low complexity. Residues 480–502 (EGEEDEQDHELEVQQDDNDDLDD) are compositionally biased toward acidic residues. Basic and acidic residues predominate over residues 525–544 (AMKDESKGEDRYDKIHQENI).

The protein localises to the cell membrane. Its subcellular location is the cytoplasm. The protein resides in the cytoskeleton. It is found in the cell projection. In terms of biological role, probably involved in connections of major cytoskeletal structures to the plasma membrane. The sequence is that of Moesin from Lytechinus variegatus (Green sea urchin).